A 394-amino-acid polypeptide reads, in one-letter code: MSKEKFERTKPHCNIGTIGHVDHGKTTLTAAITKVLSETGGAVFTDYDQIDKAPEEKKRGITISTSHVEYETTKRHYAHIDCPGHEDYVKNMITGAAQMDGAILVVSAVDGPMPQTREHILLSRQVGVPSLVVFLNKVDMVNDPEMLDLVEMEVRELLLSYKYPGDEIPIIRGSALKALQGEIEYKKSILKLMEAVDNYIPQPERSFDRPFLMPVEDVFSIAGRGTVVTGRVEQGQIKIGDAVEIIGLGSTVKTTCTGIEMFHKLLDYGQAGDNLGMLIRGIQRDAVQRGQVICAPGSVKPHTKYEAQVYILTKEEGGRHKPFFNNYRPQFFFRTADVTGTIQLPKDVEMVNPGDNVKLIIELITPIAMEEGIRFAMREGGRTIGAGVVSKIIE.

One can recognise a tr-type G domain in the interval 10-204 (KPHCNIGTIG…AVDNYIPQPE (195 aa)). Residues 19–26 (GHVDHGKT) form a G1 region. Residue 19 to 26 (GHVDHGKT) participates in GTP binding. The segment at 60 to 64 (GITIS) is G2. The interval 81-84 (DCPG) is G3. Residues 81-85 (DCPGH) and 136-139 (NKVD) each bind GTP. The tract at residues 136–139 (NKVD) is G4. Positions 174-176 (SAL) are G5.

Belongs to the TRAFAC class translation factor GTPase superfamily. Classic translation factor GTPase family. EF-Tu/EF-1A subfamily.

It is found in the mitochondrion. Its function is as follows. This protein promotes the GTP-dependent binding of aminoacyl-tRNA to the A-site of ribosomes during protein biosynthesis. The chain is Elongation factor Tu, mitochondrial (TUFA) from Reclinomonas americana.